Consider the following 663-residue polypeptide: UvrABC system protein B (663 aa).

Positions 26–414 (DGLESGLAKQ…DNVAEQVVRP (389 aa)) constitute a Helicase ATP-binding domain. Residue 39–46 (GVTGSGKT) coordinates ATP. The short motif at 92–115 (YYDYYQPEAYVPASDTFIEKDASI) is the Beta-hairpin element. The Helicase C-terminal domain maps to 430–596 (QVDDLMSEIR…GINKSVEDIL (167 aa)). The 36-residue stretch at 624–659 (AKQINALEKQMYAHAQNMEFELAAKIRDEYLLLKEQ) folds into the UVR domain.

Belongs to the UvrB family. As to quaternary structure, forms a heterotetramer with UvrA during the search for lesions. Interacts with UvrC in an incision complex.

The protein localises to the cytoplasm. In terms of biological role, the UvrABC repair system catalyzes the recognition and processing of DNA lesions. A damage recognition complex composed of 2 UvrA and 2 UvrB subunits scans DNA for abnormalities. Upon binding of the UvrA(2)B(2) complex to a putative damaged site, the DNA wraps around one UvrB monomer. DNA wrap is dependent on ATP binding by UvrB and probably causes local melting of the DNA helix, facilitating insertion of UvrB beta-hairpin between the DNA strands. Then UvrB probes one DNA strand for the presence of a lesion. If a lesion is found the UvrA subunits dissociate and the UvrB-DNA preincision complex is formed. This complex is subsequently bound by UvrC and the second UvrB is released. If no lesion is found, the DNA wraps around the other UvrB subunit that will check the other stand for damage. The protein is UvrABC system protein B of Legionella pneumophila (strain Lens).